Consider the following 450-residue polypeptide: Saccharopine dehydrogenase [NADP(+), L-glutamate-forming] (450 aa).

NADP(+) is bound by residues 9–12 (SGFV), 32–34 (CRT), 54–55 (DV), I75, 97–98 (TS), 124–126 (VDP), and S174. Residues 98-99 (SY) and D125 contribute to the L-saccharopine site. Residues R223 and 244-246 (TLR) each bind L-saccharopine.

The protein belongs to the saccharopine dehydrogenase family. In terms of assembly, homodimer.

Its subcellular location is the cytoplasm. The catalysed reaction is L-saccharopine + NADP(+) + H2O = (S)-2-amino-6-oxohexanoate + L-glutamate + NADPH + H(+). Its pathway is amino-acid biosynthesis; L-lysine biosynthesis via AAA pathway; L-lysine from L-alpha-aminoadipate (fungal route): step 2/3. The polypeptide is Saccharopine dehydrogenase [NADP(+), L-glutamate-forming] (Schizosaccharomyces pombe (strain 972 / ATCC 24843) (Fission yeast)).